Here is a 197-residue protein sequence, read N- to C-terminus: Nucleoid occlusion factor SlmA (197 aa).

In terms of domain architecture, HTH tetR-type spans 7–67 (INRREHILQC…GLIDFIEESL (61 aa)). Positions 30 to 49 (TTAKLAAEVGVSEAALYRHF) form a DNA-binding region, H-T-H motif.

This sequence belongs to the nucleoid occlusion factor SlmA family. In terms of assembly, homodimer. Interacts with FtsZ.

The protein localises to the cytoplasm. Its subcellular location is the nucleoid. In terms of biological role, required for nucleoid occlusion (NO) phenomenon, which prevents Z-ring formation and cell division over the nucleoid. Acts as a DNA-associated cell division inhibitor that binds simultaneously chromosomal DNA and FtsZ, and disrupts the assembly of FtsZ polymers. SlmA-DNA-binding sequences (SBS) are dispersed on non-Ter regions of the chromosome, preventing FtsZ polymerization at these regions. The sequence is that of Nucleoid occlusion factor SlmA from Shewanella sediminis (strain HAW-EB3).